Consider the following 379-residue polypeptide: Chaperone protein DnaJ (379 aa).

The J domain occupies 5-70 (DYYEVLGVSR…QKRAAYDQYG (66 aa)). The segment at 134–212 (GVTKEIRIPT…CHGHGRVEKS (79 aa)) adopts a CR-type zinc-finger fold. Zn(2+) is bound by residues Cys147, Cys150, Cys164, Cys167, Cys186, Cys189, Cys200, and Cys203. 4 CXXCXGXG motif repeats span residues 147–154 (CDVCHGSG), 164–171 (CPTCHGAG), 186–193 (CPHCHGRG), and 200–207 (CNKCHGHG).

The protein belongs to the DnaJ family. In terms of assembly, homodimer. Requires Zn(2+) as cofactor.

Its subcellular location is the cytoplasm. Functionally, participates actively in the response to hyperosmotic and heat shock by preventing the aggregation of stress-denatured proteins and by disaggregating proteins, also in an autonomous, DnaK-independent fashion. Unfolded proteins bind initially to DnaJ; upon interaction with the DnaJ-bound protein, DnaK hydrolyzes its bound ATP, resulting in the formation of a stable complex. GrpE releases ADP from DnaK; ATP binding to DnaK triggers the release of the substrate protein, thus completing the reaction cycle. Several rounds of ATP-dependent interactions between DnaJ, DnaK and GrpE are required for fully efficient folding. Also involved, together with DnaK and GrpE, in the DNA replication of plasmids through activation of initiation proteins. The polypeptide is Chaperone protein DnaJ (Yersinia pseudotuberculosis serotype O:1b (strain IP 31758)).